Here is a 527-residue protein sequence, read N- to C-terminus: Ribonuclease Y 2 (527 aa).

Residues 2–22 traverse the membrane as a helical segment; the sequence is IAMIATAIIGIVAGGGLGWAL. The region spanning 339 to 432 is the HD domain; the sequence is QYFHCGEVGW…VIAADAVSGA (94 aa).

It belongs to the RNase Y family.

The protein localises to the cell membrane. Endoribonuclease that initiates mRNA decay. This Bdellovibrio bacteriovorus (strain ATCC 15356 / DSM 50701 / NCIMB 9529 / HD100) protein is Ribonuclease Y 2.